The primary structure comprises 78 residues: Large ribosomal subunit protein eL20 (78 aa).

It belongs to the eukaryotic ribosomal protein eL20 family. In terms of assembly, part of the 50S ribosomal subunit. Binds 23S rRNA.

The polypeptide is Large ribosomal subunit protein eL20 (Pyrobaculum islandicum (strain DSM 4184 / JCM 9189 / GEO3)).